A 185-amino-acid polypeptide reads, in one-letter code: Gastrokine-1 (185 aa).

A signal peptide spans M1–A20. In terms of domain architecture, BRICHOS spans N54 to A150. C81 and C142 are disulfide-bonded.

Belongs to the gastrokine family. As to expression, expressed in stomach (at protein level). No expression is detected in cancer tissue or gastric cancer cell lines.

Its subcellular location is the secreted. It is found in the cytoplasmic granule. The protein resides in the golgi apparatus. Functionally, has mitogenic activity and may be involved in maintaining the integrity of the gastric mucosal epithelium. In Homo sapiens (Human), this protein is Gastrokine-1 (GKN1).